The chain runs to 88 residues: Large ribosomal subunit protein bL27 (88 aa).

The segment at 1 to 21 is disordered; that stretch reads MAHKKGASSSRNGRDSAAQRL.

It belongs to the bacterial ribosomal protein bL27 family.

The polypeptide is Large ribosomal subunit protein bL27 (Mycobacterium marinum (strain ATCC BAA-535 / M)).